The primary structure comprises 222 residues: UPF0758 protein Cag_1513 (222 aa).

One can recognise an MPN domain in the interval 100–222 (KIMAAGDVFE…WYSFRERGLL (123 aa)). Residues histidine 171, histidine 173, and aspartate 184 each contribute to the Zn(2+) site. The JAMM motif motif lies at 171 to 184 (HNHPSGDVNPSNAD).

It belongs to the UPF0758 family.

This Chlorobium chlorochromatii (strain CaD3) protein is UPF0758 protein Cag_1513.